The primary structure comprises 435 residues: MKLYDTLTKTNVDIDANEINIYVCGPTVYDHIHIGNLRPIVTFDVLRRLLEHSNKKVNFVHNLTDIDDKIINQAQRLNLSEEEVTKRYTSAYFEILDELNIKLPKIVKVTDVMSGIIKYIEKIYDKQYAYELDGDIYFDTTRIADYGVLSKRKLDEQISGIRVKSNENKTSPNDFVLWKKTVEGIKWNSRFGLGRPGWHTECAYIIDQEFKQKGFVIHGGGIDLVFPHHENENAQNLALHNKNLVNCWVHVGYLLIDNEKMSKSLNNFIYVKHLIESHNYRAIRWVFYNTAHTQPLNFDGTIIKAAQKDVEKIISTVNRFRTFLIANKNNIPSSSLVCEEFKKALFDNLNFANATKVIWDLIKVLNESIAYKKIDENIWAYQQLIWCLEIYGIVPDMIHNEQIIDQINQWSELLNNKDYEKADSIRNKLINKKVL.

Cys-24 serves as a coordination point for Zn(2+). The short motif at 26–36 (PTVYDHIHIGN) is the 'HIGH' region element. Residues Cys-202, His-228, and Glu-232 each coordinate Zn(2+). A 'KMSKS' region motif is present at residues 260-264 (KMSKS). Lys-263 is an ATP binding site.

It belongs to the class-I aminoacyl-tRNA synthetase family. In terms of assembly, monomer. It depends on Zn(2+) as a cofactor.

The protein resides in the cytoplasm. The catalysed reaction is tRNA(Cys) + L-cysteine + ATP = L-cysteinyl-tRNA(Cys) + AMP + diphosphate. The chain is Cysteine--tRNA ligase from Mycoplasmoides gallisepticum (strain R(low / passage 15 / clone 2)) (Mycoplasma gallisepticum).